The sequence spans 858 residues: Low-density lipoprotein receptor-related protein 12 (858 aa).

The N-terminal stretch at 1–32 is a signal peptide; that stretch reads MARRWSTKESQRRGSAWLLLFLAGVYGNGALA. At 33 to 492 the chain is on the extracellular side; the sequence is ELSENVHISG…ENCPVIVPTR (460 aa). Cystine bridges form between Cys-47–Cys-76, Cys-103–Cys-122, Cys-166–Cys-178, Cys-173–Cys-191, Cys-185–Cys-200, Cys-215–Cys-232, Cys-222–Cys-245, Cys-239–Cys-254, and Cys-259–Cys-285. The CUB 1 domain occupies 47-159; it reads CGESPEQIRA…KGFRLAYFSG (113 aa). The N-linked (GlcNAc...) asparagine glycan is linked to Asn-75. LDL-receptor class A domains lie at 165 to 201 and 214 to 255; these read DCACDQFRCGNGKCIPEAWKCNSMDECGDSSDEEVCA and PCAY…IDCD. In terms of domain architecture, CUB 2 spans 259 to 372; that stretch reads CGQWLKYFYG…RGFNATYQVD (114 aa). 2 N-linked (GlcNAc...) asparagine glycosylation sites follow: Asn-284 and Asn-366. LDL-receptor class A domains are found at residues 374-411, 412-449, and 450-486; these read FCLPWEIPCGGNWGCYTEQQRCDGYWHCPNGRDEINCT, MCQKEEFPCSRNGVCYPRSDRCNYQNHCPNGSDEKNCF, and FCQPGNFHCKNNRCVFESWVCDSQDDCGDGSDEENCP. 9 cysteine pairs are disulfide-bonded: Cys-375–Cys-388, Cys-382–Cys-401, Cys-395–Cys-410, Cys-413–Cys-426, Cys-420–Cys-439, Cys-433–Cys-448, Cys-451–Cys-463, Cys-458–Cys-476, and Cys-470–Cys-485. N-linked (GlcNAc...) asparagine glycosylation occurs at Asn-409. The N-linked (GlcNAc...) asparagine glycan is linked to Asn-441. A helical transmembrane segment spans residues 493-513; it reads VITAAVIGSLICGLLLVIALG. The Cytoplasmic portion of the chain corresponds to 514-858; it reads CTCKLYSLRM…TSDDEALLLC (345 aa). 2 disordered regions span residues 619–721 and 746–767; these read ALVS…VSPA and SSSTTQNRSPLRQLDTAVSGRE. Low complexity predominate over residues 712-721; that stretch reads SVEAPSVSPA. Residues 746–755 are compositionally biased toward polar residues; it reads SSSTTQNRSP.

The protein belongs to the LDLR family. May interact with RACK1, ZFYVE9 and NMRK2.

The protein localises to the membrane. Its subcellular location is the coated pit. Its function is as follows. Probable receptor, which may be involved in the internalization of lipophilic molecules and/or signal transduction. May act as a tumor suppressor. The sequence is that of Low-density lipoprotein receptor-related protein 12 (Lrp12) from Mus musculus (Mouse).